A 300-amino-acid chain; its full sequence is UDP-N-acetylenolpyruvoylglucosamine reductase (300 aa).

Positions 22-190 (RVGGAAEWLA…LSARFRLQPG (169 aa)) constitute an FAD-binding PCMH-type domain. Arg169 is an active-site residue. Ser220 functions as the Proton donor in the catalytic mechanism. The active site involves Glu290.

This sequence belongs to the MurB family. FAD is required as a cofactor.

It localises to the cytoplasm. The enzyme catalyses UDP-N-acetyl-alpha-D-muramate + NADP(+) = UDP-N-acetyl-3-O-(1-carboxyvinyl)-alpha-D-glucosamine + NADPH + H(+). It participates in cell wall biogenesis; peptidoglycan biosynthesis. Functionally, cell wall formation. The protein is UDP-N-acetylenolpyruvoylglucosamine reductase of Synechococcus sp. (strain CC9605).